The following is a 698-amino-acid chain: MWGRLGAFLQQAVETREPTQDLLQSFIQHWKGVTQYYLETSDESCPARETDIPWRLRQLIDILVFEESNNGSQLSSGDEEDSGAGSHAGPCMEYLLQHKILETLCTLAKAEYPPGMRQQVLLFYSRLLAKVQRPLLHYLSVHRPVQKLIALAEDPVGATAQKEELQFLTAVCTKLEKDPSLLVHVLEEGSGSRVRCSGGEQDGETEARNHKPRQNLFKALLRLCTCQKGRLCVRAREALLRVLHSAQQEGPVHLIVQSKLSQYVTEHLCELHRCIPLSIHPCDITALQETDWRKDSGSQESDGMENAEAALQRFLCWVEYCDCLVRESHEVVAMEITRSIKEGYLQGILQPELLEVSELSILRSTAILTAVLHRFTATPLLRQFLTFLFGDERGPETRGDRGSQLRSQLIQRCNHLSDEISLASLRLFEEILQMPEEIALHSLVIRNLETRSYLAGGQDESRGQESETWDGAEELEEDPYFTDGFPDTGIRLPRSDNAHRTEPAGTEQWVKSFLSLVPEEIKSSDTGYDGYLQDAIVQYRACCQQVAQWGWPVSSKGTGHSQQEFYEGHFMEVLLGRLGGILDQPYDVNLQVTSLLSRLALFPHPNLQEYLLNPFITLAPGARSLFSVLVRVVADLAQRSLRVPDLQEMLLLVRRQLLANSANEQLNHVTLCRGAVVLEEFCKELAAAACVTHSPVGF.

This sequence belongs to the FHIP family.

The sequence is that of FHF complex subunit HOOK-interacting protein 2B (fhip2b) from Xenopus tropicalis (Western clawed frog).